Here is a 129-residue protein sequence, read N- to C-terminus: Small ribosomal subunit protein uS11 (129 aa).

Belongs to the universal ribosomal protein uS11 family. Part of the 30S ribosomal subunit. Interacts with proteins S7 and S18. Binds to IF-3.

In terms of biological role, located on the platform of the 30S subunit, it bridges several disparate RNA helices of the 16S rRNA. Forms part of the Shine-Dalgarno cleft in the 70S ribosome. This Limosilactobacillus fermentum (strain NBRC 3956 / LMG 18251) (Lactobacillus fermentum) protein is Small ribosomal subunit protein uS11.